Consider the following 899-residue polypeptide: Alanine--tRNA ligase, chloroplastic/mitochondrial (899 aa).

The Zn(2+) site is built by H581, H585, C683, and H687.

This sequence belongs to the class-II aminoacyl-tRNA synthetase family. In terms of assembly, monomer. The cofactor is Zn(2+).

Its subcellular location is the plastid. The protein resides in the chloroplast. It is found in the mitochondrion. It carries out the reaction tRNA(Ala) + L-alanine + ATP = L-alanyl-tRNA(Ala) + AMP + diphosphate. Functionally, catalyzes the attachment of alanine to tRNA(Ala) in a two-step reaction: alanine is first activated by ATP to form Ala-AMP and then transferred to the acceptor end of tRNA(Ala). Also edits incorrectly charged tRNA(Ala) via its editing domain. The chain is Alanine--tRNA ligase, chloroplastic/mitochondrial from Micromonas pusilla (strain CCMP1545) (Picoplanktonic green alga).